Consider the following 369-residue polypeptide: Dual-specificity RNA methyltransferase RlmN (369 aa).

The active-site Proton acceptor is the E94. The Radical SAM core domain maps to 113–346; sequence ESEKWTMCLS…CTIRESRGID (234 aa). A disulfide bridge connects residues C120 and C351. Residues C127, C131, and C134 each contribute to the [4Fe-4S] cluster site. S-adenosyl-L-methionine is bound by residues 177–178, S209, 232–234, and N308; these read GE and SLH. C351 functions as the S-methylcysteine intermediate in the catalytic mechanism.

This sequence belongs to the radical SAM superfamily. RlmN family. [4Fe-4S] cluster is required as a cofactor.

The protein localises to the cytoplasm. The catalysed reaction is adenosine(2503) in 23S rRNA + 2 reduced [2Fe-2S]-[ferredoxin] + 2 S-adenosyl-L-methionine = 2-methyladenosine(2503) in 23S rRNA + 5'-deoxyadenosine + L-methionine + 2 oxidized [2Fe-2S]-[ferredoxin] + S-adenosyl-L-homocysteine. The enzyme catalyses adenosine(37) in tRNA + 2 reduced [2Fe-2S]-[ferredoxin] + 2 S-adenosyl-L-methionine = 2-methyladenosine(37) in tRNA + 5'-deoxyadenosine + L-methionine + 2 oxidized [2Fe-2S]-[ferredoxin] + S-adenosyl-L-homocysteine. Functionally, specifically methylates position 2 of adenine 2503 in 23S rRNA and position 2 of adenine 37 in tRNAs. m2A2503 modification seems to play a crucial role in the proofreading step occurring at the peptidyl transferase center and thus would serve to optimize ribosomal fidelity. This chain is Dual-specificity RNA methyltransferase RlmN, found in Helicobacter hepaticus (strain ATCC 51449 / 3B1).